A 1254-amino-acid polypeptide reads, in one-letter code: Structural polyprotein (1254 aa).

Positions 1–33 (MFPFQPMYPMQPMPYRNPFAAPRRPWFPRTDPF) are necessary for nucleocapsid assembly and virus assembly. The interval 33–68 (FLAMQVQELTRSMANLTFKQRRDAPPEGPSAKKPKK) is host transcription inhibition. The short motif at 41 to 48 (LTRSMANL) is the Supraphysiological nuclear export signal element. The segment at 45-119 (MANLTFKQRR…KKPGKRQRMV (75 aa)) is disordered. Residues 64–68 (KKPKK) carry the Nuclear localization signal motif. A compositionally biased stretch (basic residues) spans 80–92 (GKKKKNQGKKKAK). The tract at residues 91-127 (AKTGPPNPKAQNGNKKKTNKKPGKRQRMVMKLESDKT) is binding to the viral RNA. 2 positions are modified to phosphothreonine: Thr93 and Thr108. Over residues 104–118 (NKKKTNKKPGKRQRM) the composition is skewed to basic residues. The ribosome-binding stretch occupies residues 112 to 126 (PGKRQRMVMKLESDK). Ser124 bears the Phosphoserine mark. The region spanning 126 to 275 (KTFPIMLEGK…KYTPENCEQW (150 aa)) is the Peptidase S3 domain. Thr127 is subject to Phosphothreonine. Active-site charge relay system residues include His152, Asp174, and Ser226. The tract at residues 276-287 (SLVTTMCLLANV) is functions as an uncleaved signal peptide for the precursor of protein E3/E2. Over 276-701 (SLVTTMCLLA…HYYHRYPMST (426 aa)) the chain is Extracellular. Residues Asn286, Asn546, and Asn652 are each glycosylated (N-linked (GlcNAc...) asparagine; by host). Residues 702-722 (ILGLSICAAIATVSVAASTWL) traverse the membrane as a helical segment. Residues 723 to 757 (FCRSRVACLTPYRLTPNARIPFCLAVLCCARTARA) lie on the Cytoplasmic side of the membrane. 3 S-palmitoyl cysteine; by host lipidation sites follow: Cys730, Cys750, and Cys751. Residues 758-772 (ETTWESLDHLWNNNQ) are Extracellular-facing. Residues 773-793 (QMFWIQLLIPLAALIVVTRLL) traverse the membrane as a helical segment. The Cytoplasmic portion of the chain corresponds to 794–795 (RC). Residues 796 to 816 (VCCVVPFLVMAGAAAPAYEHA) traverse the membrane as a helical segment. Residues 817-1224 (TTMPSQAGIS…SKTAWTWLTS (408 aa)) are Extracellular-facing. Disulfide bonds link Cys861–Cys926, Cys874–Cys906, Cys875–Cys908, and Cys880–Cys890. Residues 896-913 (VYPFMWGGAYCFCDTENT) form an E1 fusion peptide loop region. An N-linked (GlcNAc...) asparagine; by host glycan is attached at Asn946. 4 cysteine pairs are disulfide-bonded: Cys1071–Cys1083, Cys1113–Cys1188, Cys1118–Cys1192, and Cys1140–Cys1182. The helical transmembrane segment at 1225–1245 (LLGGSAVIIIIGLVLATIVAM) threads the bilayer. At 1246–1254 (YVLTNQKHN) the chain is on the cytoplasmic side.

In terms of assembly, homodimer. Homomultimer. Interacts with host karyopherin KPNA4; this interaction allows the nuclear import of the viral capsid protein. Interacts with spike glycoprotein E2. Interacts with host IRAK1; the interaction leads to inhibition of IRAK1-dependent signaling. Part of a tetrameric complex composed of host CRM1, host importin alpha/beta dimer and the viral capsid; this complex blocks the receptor-mediated transport through the nuclear pore. Interacts with host phosphatase PPP1CA; this interaction dephosphorylates the capsid protein, which increases its ability to bind to the viral genome. As to quaternary structure, the precursor of protein E3/E2 and E1 form a heterodimer shortly after synthesis. Interacts with spike glycoprotein E2. The precursor of protein E3/E2 and E1 form a heterodimer shortly after synthesis. Processing of the precursor of protein E3/E2 into E2 and E3 results in a heterodimer of the spike glycoproteins E2 and E1. Spike at virion surface are constituted of three E2-E1 heterodimers. After target cell attachment and endocytosis, E1 change conformation to form homotrimers. Interacts with 6K protein. Interacts (via fusion peptide loop) with host LDLRAD3 (via domain LDL-receptor class A 1); this interaction mediates viral entry to the host cell. 2 adjacent E2-E1 heterodimers in the trimeric spike interact with host LDLRAD3. In terms of assembly, interacts with spike glycoprotein E1. Processing of the precursor of protein E3/E2 into E2 and E3 results in a heterodimer of the spike glycoproteins E2 and E1. Spike at virion surface are constituted of a trimer of E2-E1 heterodimers. Interacts with 6K protein. Interacts with host LDLRAD3 (via domain LDL-receptor class A 1); this interaction mediates viral entry to the host cell. 2 adjacent E2-E1 heterodimers in the trimeric spike interact with host LDLRAD3. As to quaternary structure, oligomer. Interacts with spike glycoprotein E1. Interacts with spike glycoprotein E2. In terms of processing, structural polyprotein: Specific enzymatic cleavages in vivo yield mature proteins. Capsid protein is auto-cleaved during polyprotein translation, unmasking a signal peptide at the N-terminus of the precursor of E3/E2. The remaining polyprotein is then targeted to the host endoplasmic reticulum, where host signal peptidase cleaves it into pE2, 6K and E1 proteins. pE2 is further processed to mature E3 and E2 by host furin in trans-Golgi vesicle. Post-translationally, phosphorylated on serine and threonine residues. Palmitoylated via thioester bonds. These palmitoylations may induce disruption of the C-terminus transmembrane. This would result in the reorientation of E2 C-terminus from lumenal to cytoplasmic side. In terms of processing, N-glycosylated. Post-translationally, palmitoylated via thioester bonds.

It is found in the virion. The protein resides in the host cytoplasm. Its subcellular location is the host cell membrane. The protein localises to the host nucleus. It localises to the virion membrane. The enzyme catalyses Autocatalytic release of the core protein from the N-terminus of the togavirus structural polyprotein by hydrolysis of a -Trp-|-Ser- bond.. Its function is as follows. Forms an icosahedral capsid with a T=4 symmetry composed of 240 copies of the capsid protein surrounded by a lipid membrane through which penetrate 80 spikes composed of trimers of E1-E2 heterodimers. The capsid protein binds to the viral RNA genome at a site adjacent to a ribosome binding site for viral genome translation following genome release. Possesses a protease activity that results in its autocatalytic cleavage from the nascent structural protein. Following its self-cleavage, the capsid protein transiently associates with ribosomes, and within several minutes the protein binds to viral RNA and rapidly assembles into icosahedric core particles. The resulting nucleocapsid eventually associates with the cytoplasmic domain of the spike glycoprotein E2 at the cell membrane, leading to budding and formation of mature virions. In case of infection, new virions attach to target cells and after clathrin-mediated endocytosis their membrane fuses with the host endosomal membrane. This leads to the release of the nucleocapsid into the cytoplasm, followed by an uncoating event necessary for the genomic RNA to become accessible. The uncoating might be triggered by the interaction of capsid proteins with ribosomes. Binding of ribosomes would release the genomic RNA since the same region is genomic RNA-binding and ribosome-binding. Specifically inhibits interleukin-1 receptor-associated kinase 1/IRAK1-dependent signaling during viral entry, representing a means by which the alphaviruses may evade innate immune detection and activation prior to viral gene expression. Inhibits host transcription. Forms a tetrameric complex with XPO1/CRM1 and the nuclear import receptor importin. This complex blocks the central channel of host nuclear pores thereby inhibiting the receptor-mediated nuclear transport and thus the host mRNA and rRNA transcription. The inhibition of transcription is linked to a cytopathic effect on the host cell. In terms of biological role, provides the signal sequence for the translocation of the precursor of protein E3/E2 to the host endoplasmic reticulum. Furin-cleaved E3 remains associated with spike glycoprotein E1 and mediates pH protection of the latter during the transport via the secretory pathway. After virion release from the host cell, the assembly protein E3 is gradually released in the extracellular space. Plays a role in viral attachment to target host cell, by binding to the cell receptor LDLRAD3. Synthesized as a p62 precursor which is processed by furin at the cell membrane just before virion budding, giving rise to E2-E1 heterodimer. The p62-E1 heterodimer is stable, whereas E2-E1 is unstable and dissociate at low pH. p62 is processed at the last step, presumably to avoid E1 fusion activation before its final export to cell surface. E2 C-terminus contains a transitory transmembrane that would be disrupted by palmitoylation, resulting in reorientation of the C-terminal tail from lumenal to cytoplasmic side. This step is critical since E2 C-terminus is involved in budding by interacting with capsid proteins. This release of E2 C-terminus in cytoplasm occurs lately in protein export, and precludes premature assembly of particles at the endoplasmic reticulum membrane. Functionally, acts as a viroporin that participates in virus glycoprotein processing and transport to the plasma membrane, cell permeabilization and budding of viral particles. Disrupts the calcium homeostasis of the cell, probably at the endoplasmic reticulum level. This leads to cytoplasmic calcium elevation. Because of its lipophilic properties, the 6K protein is postulated to influence the selection of lipids that interact with the transmembrane domains of the glycoproteins, which, in turn, affects the deformability of the bilayer required for the extreme curvature that occurs as budding proceeds. Present in low amount in virions, about 3% compared to viral glycoproteins. Its function is as follows. Class II viral fusion protein. Fusion activity is inactive as long as E1 is bound to E2 in mature virion. After virus attachment to cell receptor LDLRAD3 and endocytosis, acidification of the endosome induce dissociation of E1/E2 heterodimer and concomitant trimerization of the E1 subunits. This E1 trimer is fusion active, and promotes release of viral nucleocapsid in cytoplasm after endosome and viral membrane fusion. Efficient fusion requires the presence of cholesterol and sphingolipid in the target membrane. This chain is Structural polyprotein, found in Bos taurus (Bovine).